The sequence spans 607 residues: Phosphoenolpyruvate carboxykinase [GTP] (607 aa).

Residues arginine 81 and 221–223 (YGG) each bind substrate. Mn(2+)-binding residues include lysine 230 and histidine 250. Serine 272 is a binding site for substrate. 273–278 (ACGKTN) lines the GTP pocket. Cysteine 274 is an active-site residue. Aspartate 297 is a Mn(2+) binding site. 388–390 (NSR) contributes to the substrate binding site. GTP is bound by residues arginine 390, arginine 421, and 516–519 (FGDN).

This sequence belongs to the phosphoenolpyruvate carboxykinase [GTP] family. As to quaternary structure, monomer. Mn(2+) serves as cofactor.

It is found in the cytoplasm. It carries out the reaction oxaloacetate + GTP = phosphoenolpyruvate + GDP + CO2. It functions in the pathway carbohydrate biosynthesis; gluconeogenesis. Functionally, catalyzes the conversion of oxaloacetate (OAA) to phosphoenolpyruvate (PEP), the rate-limiting step in the metabolic pathway that produces glucose from lactate and other precursors derived from the citric acid cycle. This Renibacterium salmoninarum (strain ATCC 33209 / DSM 20767 / JCM 11484 / NBRC 15589 / NCIMB 2235) protein is Phosphoenolpyruvate carboxykinase [GTP].